The chain runs to 136 residues: Glutaredoxin-C7 (136 aa).

One can recognise a Glutaredoxin domain in the interval 29–135 (LLRIESLASE…PLLKDAGALW (107 aa)). C49 and C52 form a disulfide bridge. Residues 133 to 136 (ALWL) carry the Responsive for interaction with TGA factors motif.

The protein belongs to the glutaredoxin family. CC-type subfamily. In terms of assembly, interacts with TGA2, TGA3, TGA7 and PAN. Interacts with TGA9 and TGA10 in the nucleus. Highly expressed in inflorescences, roots, and siliques. Expressed at lower levels in mature flowers.

The protein localises to the cytoplasm. It localises to the nucleus. Its function is as follows. Has a glutathione-disulfide oxidoreductase activity in the presence of NADPH and glutathione reductase. Reduces low molecular weight disulfides and proteins. Involved in flower development as a regulator of petal primorida initiation and further petal morphogenesis. May mediate post-translational modifications of target proteins required for normal petal organ initiation and morphogenesis. ROXY1/TGA protein interactions can occur in vivo and support their biological relevance in petal development. May be involved in the regulation of the floral regulator class C gene AG (AGAMOUS). This chain is Glutaredoxin-C7 (GRXC7), found in Arabidopsis thaliana (Mouse-ear cress).